A 92-amino-acid chain; its full sequence is Small ribosomal subunit protein uS19 (92 aa).

It belongs to the universal ribosomal protein uS19 family.

In terms of biological role, protein S19 forms a complex with S13 that binds strongly to the 16S ribosomal RNA. This is Small ribosomal subunit protein uS19 from Rickettsia africae (strain ESF-5).